Here is a 714-residue protein sequence, read N- to C-terminus: Structure-specific endonuclease subunit SLX4 2 (714 aa).

2 stretches are compositionally biased toward basic and acidic residues: residues 1 to 14 (MSPE…EDNL) and 24 to 34 (IHEETLAEESH). 2 disordered regions span residues 1-114 (MSPE…EQQG) and 338-369 (SSGP…KTPQ). Over residues 36 to 46 (QAIQRSISRLS) the composition is skewed to polar residues. Positions 79–92 (KTKKRKLKVSKPRK) are enriched in basic residues.

The protein belongs to the SLX4 family. As to quaternary structure, forms a heterodimer with SLX1. Post-translationally, phosphorylated in response to DNA damage.

It localises to the nucleus. Its function is as follows. Regulatory subunit of the SLX1-SLX4 structure-specific endonuclease that resolves DNA secondary structures generated during DNA repair and recombination. Has endonuclease activity towards branched DNA substrates, introducing single-strand cuts in duplex DNA close to junctions with ss-DNA. This Candida tropicalis (strain ATCC MYA-3404 / T1) (Yeast) protein is Structure-specific endonuclease subunit SLX4 2.